The sequence spans 822 residues: Ribonucleoside-diphosphate reductase large subunit (822 aa).

Substrate-binding positions include threonine 249, 264–265, glycine 295, 470–474, and 651–655; these read SC, NLCTE, and PTAAS. A disulfide bridge links cysteine 265 with cysteine 487. The Proton acceptor role is filled by asparagine 470. Cysteine 472 (cysteine radical intermediate) is an active-site residue. The Proton acceptor role is filled by glutamate 474.

It belongs to the ribonucleoside diphosphate reductase large chain family. As to quaternary structure, heterotetramer composed of a homodimer of the large subunit (R1) and a homodimer of the small subunit (R2). Larger multisubunit protein complex are also active, composed of (R1)n(R2)n.

It catalyses the reaction a 2'-deoxyribonucleoside 5'-diphosphate + [thioredoxin]-disulfide + H2O = a ribonucleoside 5'-diphosphate + [thioredoxin]-dithiol. In terms of biological role, ribonucleoside-diphosphate reductase holoenzyme provides the precursors necessary for viral DNA synthesis. Allows virus growth in non-dividing cells, as well as reactivation from latency in infected hosts. Catalyzes the biosynthesis of deoxyribonucleotides from the corresponding ribonucleotides. The chain is Ribonucleoside-diphosphate reductase large subunit from Gallus gallus (Chicken).